The sequence spans 205 residues: Protein GrpE (205 aa).

The tract at residues 1-40 (MSRKLHEEELTPEGMDAAQNADPAGDPVSENEGALPAAEP) is disordered.

Belongs to the GrpE family. As to quaternary structure, homodimer.

Its subcellular location is the cytoplasm. Participates actively in the response to hyperosmotic and heat shock by preventing the aggregation of stress-denatured proteins, in association with DnaK and GrpE. It is the nucleotide exchange factor for DnaK and may function as a thermosensor. Unfolded proteins bind initially to DnaJ; upon interaction with the DnaJ-bound protein, DnaK hydrolyzes its bound ATP, resulting in the formation of a stable complex. GrpE releases ADP from DnaK; ATP binding to DnaK triggers the release of the substrate protein, thus completing the reaction cycle. Several rounds of ATP-dependent interactions between DnaJ, DnaK and GrpE are required for fully efficient folding. This chain is Protein GrpE, found in Acidobacterium capsulatum (strain ATCC 51196 / DSM 11244 / BCRC 80197 / JCM 7670 / NBRC 15755 / NCIMB 13165 / 161).